The chain runs to 513 residues: Histidine ammonia-lyase (513 aa).

Positions A145–G147 form a cross-link, 5-imidazolinone (Ala-Gly). The residue at position 146 (S146) is a 2,3-didehydroalanine (Ser).

Belongs to the PAL/histidase family. Contains an active site 4-methylidene-imidazol-5-one (MIO), which is formed autocatalytically by cyclization and dehydration of residues Ala-Ser-Gly.

The protein resides in the cytoplasm. It carries out the reaction L-histidine = trans-urocanate + NH4(+). It participates in amino-acid degradation; L-histidine degradation into L-glutamate; N-formimidoyl-L-glutamate from L-histidine: step 1/3. This is Histidine ammonia-lyase from Vibrio vulnificus (strain CMCP6).